The following is a 97-amino-acid chain: Aspartyl/glutamyl-tRNA(Asn/Gln) amidotransferase subunit C (97 aa).

Low complexity predominate over residues 74–84 (TPEEATAAAPA). A disordered region spans residues 74-97 (TPEEATAAAPAREGTAFKVPRIIE).

The protein belongs to the GatC family. As to quaternary structure, heterotrimer of A, B and C subunits.

The catalysed reaction is L-glutamyl-tRNA(Gln) + L-glutamine + ATP + H2O = L-glutaminyl-tRNA(Gln) + L-glutamate + ADP + phosphate + H(+). It carries out the reaction L-aspartyl-tRNA(Asn) + L-glutamine + ATP + H2O = L-asparaginyl-tRNA(Asn) + L-glutamate + ADP + phosphate + 2 H(+). Functionally, allows the formation of correctly charged Asn-tRNA(Asn) or Gln-tRNA(Gln) through the transamidation of misacylated Asp-tRNA(Asn) or Glu-tRNA(Gln) in organisms which lack either or both of asparaginyl-tRNA or glutaminyl-tRNA synthetases. The reaction takes place in the presence of glutamine and ATP through an activated phospho-Asp-tRNA(Asn) or phospho-Glu-tRNA(Gln). This is Aspartyl/glutamyl-tRNA(Asn/Gln) amidotransferase subunit C from Anaeromyxobacter dehalogenans (strain 2CP-1 / ATCC BAA-258).